Consider the following 1067-residue polypeptide: [F-actin]-monooxygenase MICAL1 (1067 aa).

Positions 1 to 489 are monooxygenase domain; sequence MASPTSTNPA…RDLYDVLAKE (489 aa). FAD contacts are provided by residues Cys-95, 114–116, 121–123, Phe-181, Tyr-293, and Asp-393; these read EKR and RHN. Residue Thr-475 is modified to Phosphothreonine. Positions 508–612 constitute a Calponin-homology (CH) domain; that stretch reads AGTQEELLRW…YLSHFHSAFK (105 aa). The residue at position 617 (Ser-617) is a Phosphoserine. A disordered region spans residues 645–688; that stretch reads SRAKENAEDAGGKKLRLEMEAETPSTEVPPDPEPGVPLTPPSQH. The segment covering 646–663 has biased composition (basic and acidic residues); sequence RAKENAEDAGGKKLRLEM. A coiled-coil region spans residues 646–666; sequence RAKENAEDAGGKKLRLEMEAE. Positions 671–684 are enriched in pro residues; it reads EVPPDPEPGVPLTP. One can recognise an LIM zinc-binding domain in the interval 695–757; the sequence is DLCALCGEHL…LQHLPQTDHK (63 aa). Residues Cys-697, Cys-700, His-718, Cys-721, Cys-724, Cys-727, Cys-747, and His-750 each contribute to the Zn(2+) site. Residues 755–766 show a composition bias toward basic and acidic residues; that stretch reads DHKAEGSDRGPE. Disordered stretches follow at residues 755 to 838 and 867 to 886; these read DHKA…RSCS and KEEKESPFSSEEEEEDVPLD. Residues 773-789 show a composition bias toward polar residues; the sequence is PSENSMPPGLSTPTASQ. 3 positions are modified to phosphoserine: Ser-872, Ser-875, and Ser-876. Positions 876 to 886 are enriched in acidic residues; that stretch reads SEEEEEDVPLD. The important for interaction with RAB8A stretch occupies residues 901 to 1067; sequence GTMNNYPTWR…ELALGTGAQG (167 aa). The bMERB domain occupies 918 to 1067; it reads KEEEMKRFCK…ELALGTGAQG (150 aa). 2 coiled-coil regions span residues 919–962 and 999–1027; these read EEEM…QSSS and NLEEKQWQLDQELRGYMNREENLKTAADR. Ser-1057 is modified (phosphoserine).

Belongs to the Mical family. Interacts with STK38 and STK38L. Interacts with RAB1B, RAB8A, RAB10, RAB13, RAB15 and RAB35 (in their GTP-bound forms); binding to RAB1B is of low affinity compared to other Rab proteins; at least in case of RAB8A and RAB10 can bind 2 molecules of the Rab proteins simultaneously; ternary complex formation of RAB8A, RAB13 and MICAL1 is possible. Associates with the SH3 domain of NEDD9. Interacts with VIM and PLXNA3. Interacts with GRAF1/ARHGAP26, GRAF2/ARHGAP10, RAB8A, RAB8B and RAB10; may bind simultaneously to GRAFs and Rabs and connects GRAFs to Rabs. Does not interact with RAB1 and RAB11A. FAD serves as cofactor. As to expression, expressed in the thymus, lung, spleen, kidney, testis and hematopoietic cells.

It is found in the cytoplasm. The protein localises to the cytoskeleton. Its subcellular location is the endosome membrane. It localises to the midbody. It catalyses the reaction L-methionyl-[F-actin] + NADPH + O2 + H(+) = L-methionyl-(R)-S-oxide-[F-actin] + NADP(+) + H2O. The catalysed reaction is NADPH + O2 + H(+) = H2O2 + NADP(+). Its function is as follows. Monooxygenase that promotes depolymerization of F-actin by mediating oxidation of specific methionine residues on actin to form methionine-sulfoxide, resulting in actin filament disassembly and preventing repolymerization. In the absence of actin, it also functions as a NADPH oxidase producing H(2)O(2). Acts as a cytoskeletal regulator that connects NEDD9 to intermediate filaments. Also acts as a negative regulator of apoptosis via its interaction with STK38 and STK38L; acts by antagonizing STK38 and STK38L activation by MST1/STK4. Involved in regulation of lamina-specific connectivity in the nervous system such as the development of lamina-restricted hippocampal connections. Through redox regulation of the actin cytoskeleton controls the intracellular distribution of secretory vesicles containing L1/neurofascin/NgCAM family proteins in neurons, thereby regulating their cell surface levels. May act as Rab effector protein and play a role in vesicle trafficking. Promotes endosomal tubule extension by associating with RAB8 (RAB8A or RAB8B), RAB10 and GRAF (GRAF1/ARHGAP26 or GRAF2/ARHGAP10) on the endosomal membrane which may connect GRAFs to Rabs, thereby participating in neosynthesized Rab8-Rab10-Rab11-dependent protein export. The chain is [F-actin]-monooxygenase MICAL1 (MICAL1) from Homo sapiens (Human).